We begin with the raw amino-acid sequence, 126 residues long: Large ribosomal subunit protein bL17 (126 aa).

Belongs to the bacterial ribosomal protein bL17 family. In terms of assembly, part of the 50S ribosomal subunit. Contacts protein L32.

The sequence is that of Large ribosomal subunit protein bL17 from Rickettsia felis (strain ATCC VR-1525 / URRWXCal2) (Rickettsia azadi).